The following is a 134-amino-acid chain: MESNNYINFFFKKKKYTKSVADVRNIYCSPRKLRLVADIIRNKKVEYSLFILKNIKNKGGGIIYKILLSVISNWKNYENNINNYNIYIEKVLINQGYQLKKIRPGPQGRGNKVRKRYSNLKIIINSKFNNYYGT.

Belongs to the universal ribosomal protein uL22 family. In terms of assembly, part of the 50S ribosomal subunit.

This protein binds specifically to 23S rRNA; its binding is stimulated by other ribosomal proteins, e.g. L4, L17, and L20. It is important during the early stages of 50S assembly. It makes multiple contacts with different domains of the 23S rRNA in the assembled 50S subunit and ribosome. Its function is as follows. The globular domain of the protein is located near the polypeptide exit tunnel on the outside of the subunit, while an extended beta-hairpin is found that lines the wall of the exit tunnel in the center of the 70S ribosome. This is Large ribosomal subunit protein uL22 from Karelsulcia muelleri (strain GWSS) (Sulcia muelleri).